A 440-amino-acid chain; its full sequence is uncharacterized protein (440 aa).

Helical transmembrane passes span 1 to 21 (MLLV…QLYR), 29 to 49 (TVFI…SAFE), 70 to 90 (LLQM…IARI), 101 to 121 (VGVL…GIAM), 179 to 199 (TSII…LSLG), 226 to 246 (FVIR…AATS), 258 to 278 (IVAS…LLFF), 343 to 363 (IYPA…PFSF), 366 to 386 (ILTL…VGGG), and 389 to 409 (FAAI…GLLI).

Belongs to the dicarboxylate/amino acid:cation symporter (DAACS) (TC 2.A.23) family.

The protein resides in the cell membrane. This is an uncharacterized protein from Haemophilus influenzae (strain ATCC 51907 / DSM 11121 / KW20 / Rd).